The following is a 314-amino-acid chain: 2,3-dihydroxyphenylpropionate/2,3-dihydroxicinnamic acid 1,2-dioxygenase (314 aa).

The Proton donor role is filled by His115. His179 serves as the catalytic Proton acceptor.

Belongs to the LigB/MhpB extradiol dioxygenase family. As to quaternary structure, homotetramer. Requires Fe(2+) as cofactor.

It carries out the reaction 3-(2,3-dihydroxyphenyl)propanoate + O2 = (2Z,4E)-2-hydroxy-6-oxonona-2,4-dienedioate + H(+). The enzyme catalyses (2E)-3-(2,3-dihydroxyphenyl)prop-2-enoate + O2 = (2Z,4E,7E)-2-hydroxy-6-oxonona-2,4,7-trienedioate + H(+). It participates in aromatic compound metabolism; 3-phenylpropanoate degradation. Catalyzes the non-heme iron(II)-dependent oxidative cleavage of 2,3-dihydroxyphenylpropionic acid and 2,3-dihydroxicinnamic acid into 2-hydroxy-6-ketononadienedioate and 2-hydroxy-6-ketononatrienedioate, respectively. The chain is 2,3-dihydroxyphenylpropionate/2,3-dihydroxicinnamic acid 1,2-dioxygenase from Escherichia coli (strain 55989 / EAEC).